Here is a 273-residue protein sequence, read N- to C-terminus: 4-hydroxy-tetrahydrodipicolinate reductase (273 aa).

An NAD(+)-binding site is contributed by 12-17 (GSGGRM). Arginine 39 contacts NADP(+). NAD(+) contacts are provided by residues 102-104 (GTT) and 126-129 (AANF). Histidine 159 acts as the Proton donor/acceptor in catalysis. Histidine 160 provides a ligand contact to (S)-2,3,4,5-tetrahydrodipicolinate. Lysine 163 acts as the Proton donor in catalysis. Residue 169-170 (GT) participates in (S)-2,3,4,5-tetrahydrodipicolinate binding.

The protein belongs to the DapB family. In terms of assembly, homotetramer.

It localises to the cytoplasm. The catalysed reaction is (S)-2,3,4,5-tetrahydrodipicolinate + NAD(+) + H2O = (2S,4S)-4-hydroxy-2,3,4,5-tetrahydrodipicolinate + NADH + H(+). It catalyses the reaction (S)-2,3,4,5-tetrahydrodipicolinate + NADP(+) + H2O = (2S,4S)-4-hydroxy-2,3,4,5-tetrahydrodipicolinate + NADPH + H(+). It functions in the pathway amino-acid biosynthesis; L-lysine biosynthesis via DAP pathway; (S)-tetrahydrodipicolinate from L-aspartate: step 4/4. Functionally, catalyzes the conversion of 4-hydroxy-tetrahydrodipicolinate (HTPA) to tetrahydrodipicolinate. The sequence is that of 4-hydroxy-tetrahydrodipicolinate reductase from Serratia proteamaculans (strain 568).